A 472-amino-acid chain; its full sequence is Fumarate hydratase class II (472 aa).

The segment at 1-20 (MSPHENPSVETRTESDTFGP) is disordered. Residues 105 to 107 (SGT), 136 to 139 (HPND), 146 to 148 (SSN), and Thr194 each bind substrate. The interval 127–149 (GKRGGKSPVHPNDHCNRGQSSND) is disordered. Residue His195 is the Proton donor/acceptor of the active site. The active site involves Ser325. Residues Ser326 and 331–333 (KVN) each bind substrate.

Belongs to the class-II fumarase/aspartase family. Fumarase subfamily. As to quaternary structure, homotetramer.

Its subcellular location is the cytoplasm. It carries out the reaction (S)-malate = fumarate + H2O. The protein operates within carbohydrate metabolism; tricarboxylic acid cycle; (S)-malate from fumarate: step 1/1. In terms of biological role, involved in the TCA cycle. Catalyzes the stereospecific interconversion of fumarate to L-malate. This chain is Fumarate hydratase class II, found in Methylorubrum extorquens (strain ATCC 14718 / DSM 1338 / JCM 2805 / NCIMB 9133 / AM1) (Methylobacterium extorquens).